Consider the following 215-residue polypeptide: Large ribosomal subunit protein uL3 (215 aa).

N5-methylglutamine is present on Q156.

It belongs to the universal ribosomal protein uL3 family. In terms of assembly, part of the 50S ribosomal subunit. Forms a cluster with proteins L14 and L19. Methylated by PrmB.

In terms of biological role, one of the primary rRNA binding proteins, it binds directly near the 3'-end of the 23S rRNA, where it nucleates assembly of the 50S subunit. This is Large ribosomal subunit protein uL3 from Xylella fastidiosa (strain 9a5c).